We begin with the raw amino-acid sequence, 265 residues long: Transcription factor LBX1b (265 aa).

Residues 121–180 (RRKSRTAFTNHQLYELEKRFLHQKYLSPADRDQIAHQLGLTNAQVITWFQNRRAKLKRDL) constitute a DNA-binding region (homeobox).

It localises to the nucleus. Functionally, transcription factor required for the development of hypaxial muscles. This Danio rerio (Zebrafish) protein is Transcription factor LBX1b.